Reading from the N-terminus, the 556-residue chain is Urocanate hydratase (556 aa).

NAD(+) is bound by residues glycine 52–glycine 53, glutamine 130, glycine 176–glycine 178, glutamate 196, arginine 201, asparagine 242–alanine 243, glutamine 263–histidine 267, tyrosine 273–leucine 274, and tyrosine 322. Cysteine 410 is a catalytic residue. Glycine 492 is an NAD(+) binding site.

This sequence belongs to the urocanase family. It depends on NAD(+) as a cofactor.

The protein resides in the cytoplasm. The enzyme catalyses 4-imidazolone-5-propanoate = trans-urocanate + H2O. It functions in the pathway amino-acid degradation; L-histidine degradation into L-glutamate; N-formimidoyl-L-glutamate from L-histidine: step 2/3. In terms of biological role, catalyzes the conversion of urocanate to 4-imidazolone-5-propionate. The polypeptide is Urocanate hydratase (Bradyrhizobium sp. (strain ORS 278)).